A 131-amino-acid chain; its full sequence is Large-conductance mechanosensitive channel (131 aa).

2 helical membrane-spanning segments follow: residues 14–34 and 67–87; these read VIDL…VTSL and GSFI…FIFI.

It belongs to the MscL family. As to quaternary structure, homopentamer.

Its subcellular location is the cell membrane. Channel that opens in response to stretch forces in the membrane lipid bilayer. May participate in the regulation of osmotic pressure changes within the cell. In Bacillus pumilus (strain SAFR-032), this protein is Large-conductance mechanosensitive channel.